We begin with the raw amino-acid sequence, 489 residues long: Fumarate reductase (CoM/CoB) subunit B (489 aa).

Residues 2–89 (INVKVLRFEP…GAVIEPVDLP (88 aa)) enclose the 2Fe-2S ferredoxin-type domain. [2Fe-2S] cluster contacts are provided by Cys-53, Cys-58, Cys-61, and Cys-73. 4Fe-4S ferredoxin-type domains lie at 124–158 (PEDY…YAGP) and 178–209 (AAGG…PGDA). [4Fe-4S] cluster contacts are provided by Cys-136, Cys-139, Cys-142, Cys-146, Cys-189, Cys-192, Cys-195, and Cys-199.

As to quaternary structure, subunit B of the heterodimeric fumarate reductase of methanogenic Archaea, composed of subunits A (TfrA) and B (TfrB). [2Fe-2S] cluster serves as cofactor. [4Fe-4S] cluster is required as a cofactor.

The protein localises to the cytoplasm. It catalyses the reaction coenzyme B + coenzyme M + fumarate = coenzyme M-coenzyme B heterodisulfide + succinate. Catalyzes the reduction of fumarate with reduced coenzyme M (CoM-S-H) and coenzyme B (CoB-S-H). In vitro, is able to reduces fumarate with reduced benzyl viologen, oxidize CoM-S-H and CoB-S-H to CoM-S-S-CoB with methylene blue, and reduce CoM-S-S-CoB with reduced benzyl viologen. The enzyme has specificity for the two thiol compounds as the CoB--CoM heterodisulfide reductase. The enzyme is very sensitive to oxygen. The sequence is that of Fumarate reductase (CoM/CoB) subunit B from Methanothermobacter marburgensis (strain ATCC BAA-927 / DSM 2133 / JCM 14651 / NBRC 100331 / OCM 82 / Marburg) (Methanobacterium thermoautotrophicum).